Reading from the N-terminus, the 190-residue chain is Ribosome maturation factor RimM (190 aa).

The PRC barrel domain maps to 102-190 (EDEYYWIDLV…RIDSDWPLED (89 aa)).

The protein belongs to the RimM family. As to quaternary structure, binds ribosomal protein uS19.

It localises to the cytoplasm. Its function is as follows. An accessory protein needed during the final step in the assembly of 30S ribosomal subunit, possibly for assembly of the head region. Essential for efficient processing of 16S rRNA. May be needed both before and after RbfA during the maturation of 16S rRNA. It has affinity for free ribosomal 30S subunits but not for 70S ribosomes. This Bordetella avium (strain 197N) protein is Ribosome maturation factor RimM.